Here is a 249-residue protein sequence, read N- to C-terminus: Domoic acid biosynthesis cluster protein B (249 aa).

In terms of biological role, unknown function: part of the gene cluster that mediates the biosynthesis of domoic acid (DA) and derivatives, natural products with neurochemical activity acting as ionotropic glutamate receptor (iGluR) agonists, thus being neurotoxins causing amnesic shellfish poisoning (ASP). In Pseudo-nitzschia multiseries (Marine planktonic diatom), this protein is Domoic acid biosynthesis cluster protein B.